A 273-amino-acid chain; its full sequence is Large ribosomal subunit protein uL2cz/uL2cy (273 aa).

Disordered stretches follow at residues 1–24 (MAIH…QAKS) and 224–254 (NPVD…PALG).

This sequence belongs to the universal ribosomal protein uL2 family. In terms of assembly, part of the 50S ribosomal subunit.

The protein resides in the plastid. It localises to the chloroplast. This chain is Large ribosomal subunit protein uL2cz/uL2cy (rpl2-A), found in Nymphaea alba (White water-lily).